The chain runs to 415 residues: Gamma-glutamyl phosphate reductase (415 aa).

It belongs to the gamma-glutamyl phosphate reductase family.

The protein localises to the cytoplasm. The enzyme catalyses L-glutamate 5-semialdehyde + phosphate + NADP(+) = L-glutamyl 5-phosphate + NADPH + H(+). The protein operates within amino-acid biosynthesis; L-proline biosynthesis; L-glutamate 5-semialdehyde from L-glutamate: step 2/2. Catalyzes the NADPH-dependent reduction of L-glutamate 5-phosphate into L-glutamate 5-semialdehyde and phosphate. The product spontaneously undergoes cyclization to form 1-pyrroline-5-carboxylate. This Bacillus cereus (strain 03BB102) protein is Gamma-glutamyl phosphate reductase.